We begin with the raw amino-acid sequence, 354 residues long: Thiamine thiazole synthase (354 aa).

Substrate contacts are provided by residues A83, 104–105, G112, and V177; that span reads EA. C210 is subject to 2,3-didehydroalanine (Cys). Substrate is bound by residues D212, H227, M305, and 315-317; that span reads RMG.

The protein belongs to the THI4 family. In terms of assembly, homooctamer. Fe cation serves as cofactor. During the catalytic reaction, a sulfide is transferred from Cys-210 to a reaction intermediate, generating a dehydroalanine residue.

The protein resides in the cytoplasm. It localises to the nucleus. The enzyme catalyses [ADP-thiazole synthase]-L-cysteine + glycine + NAD(+) = [ADP-thiazole synthase]-dehydroalanine + ADP-5-ethyl-4-methylthiazole-2-carboxylate + nicotinamide + 3 H2O + 2 H(+). Functionally, involved in biosynthesis of the thiamine precursor thiazole. Catalyzes the conversion of NAD and glycine to adenosine diphosphate 5-(2-hydroxyethyl)-4-methylthiazole-2-carboxylic acid (ADT), an adenylated thiazole intermediate. The reaction includes an iron-dependent sulfide transfer from a conserved cysteine residue of the protein to a thiazole intermediate. The enzyme can only undergo a single turnover, which suggests it is a suicide enzyme. May have additional roles in adaptation to various stress conditions and in DNA damage tolerance. The protein is Thiamine thiazole synthase of Candida albicans (strain SC5314 / ATCC MYA-2876) (Yeast).